The sequence spans 518 residues: PTS system mannitol-specific EIICB component (518 aa).

Over 1 to 31 (MDTMSNSQQNKGIGRKVQAFGSFLSSMIMPN) the chain is Cytoplasmic. The PTS EIIC type-2 domain occupies 20-352 (FGSFLSSMIM…LKFTKDPKQD (333 aa)). The helical transmembrane segment at 32-53 (IGAFIAWGFIAAIFIDNGWFPN) threads the bilayer. Residues 54–57 (KDLA) lie on the Extracellular side of the membrane. Residues 58–78 (QLAGPMITYLIPLLIAFSGGR) form a helical membrane-spanning segment. Topologically, residues 79–142 (LIHDLRGGII…QGFEMLFNNF (64 aa)) are cytoplasmic. The helical transmembrane segment at 143–164 (SAGILGFIMTIFGFEVLAPIMK) threads the bilayer. Over 165–173 (FIMHILSVG) the chain is Extracellular. Residues 174 to 194 (VEALVHAHLLPLVSILVEPAK) traverse the membrane as a helical segment. At 195 to 281 (IVFLNNAINH…VLMRPLLFVS (87 aa)) the chain is on the cytoplasmic side. The chain crosses the membrane as a helical span at residues 282–301 (VILGGMTGVATYSLLDFGFK). The Extracellular portion of the chain corresponds to 302–321 (TPASPGSIIVYAINAPKGEF). A helical transmembrane segment spans residues 322–343 (LHMLTGVVLAALVSFVVSALIL). Residues 344-518 (KFTKDPKQDL…LINNLKEDQD (175 aa)) are Cytoplasmic-facing. Positions 369 to 406 (SVASKLSAKDDNKAADNKTAETTTATAASNKAEDKDSD) are disordered. The span at 375–387 (SAKDDNKAADNKT) shows a compositional bias: basic and acidic residues. The span at 388–398 (AETTTATAASN) shows a compositional bias: low complexity. Residues 426–518 (DHVIFACDAG…LINNLKEDQD (93 aa)) enclose the PTS EIIB type-2 domain. Catalysis depends on Cys-432, which acts as the Phosphocysteine intermediate. Cys-432 carries the phosphocysteine; by EIIA modification.

As to quaternary structure, homodimer.

Its subcellular location is the cell membrane. It catalyses the reaction D-mannitol(out) + N(pros)-phospho-L-histidyl-[protein] = D-mannitol 1-phosphate(in) + L-histidyl-[protein]. Functionally, the phosphoenolpyruvate-dependent sugar phosphotransferase system (sugar PTS), a major carbohydrate active transport system, catalyzes the phosphorylation of incoming sugar substrates concomitantly with their translocation across the cell membrane. The enzyme II CmtAB PTS system is involved in D-mannitol transport. The chain is PTS system mannitol-specific EIICB component from Staphylococcus carnosus.